We begin with the raw amino-acid sequence, 567 residues long: Zinc finger protein 512 (567 aa).

Residues 1 to 34 (MSSRLGAVPATPGPTPFKQQRSTRIVGAKNSRTQ) are disordered. Residues lysine 18 and lysine 84 each participate in a glycyl lysine isopeptide (Lys-Gly) (interchain with G-Cter in SUMO2) cross-link. The interval 87–148 (AASHVEGPGG…QTRRIRKEPP (62 aa)) is disordered. Basic residues predominate over residues 119–130 (KKHKLYGRKQRP). The C2H2-type 1 zinc finger occupies 197–220 (FTCHHCGKQLRSLAGMKYHVMANH). Lysine 227 is covalently cross-linked (Glycyl lysine isopeptide (Lys-Gly) (interchain with G-Cter in SUMO2)). The C2H2-type 2 zinc-finger motif lies at 287-310 (LKCHHCGKPYRSKAGLAYHLRSEH). Lysine 333 participates in a covalent cross-link: Glycyl lysine isopeptide (Lys-Gly) (interchain with G-Cter in SUMO2). The segment at 406–430 (IQCPNQGCEAVYSSVSGLKAHLGSC) adopts a C2H2-type 3; atypical zinc-finger fold. The C2H2-type 3 zinc-finger motif lies at 440–463 (YKCLLCQKEFVSESGVKYHINSVH). The span at 485–494 (KQRQQEEEKR) shows a compositional bias: basic and acidic residues. The segment at 485 to 567 (KQRQQEEEKR…PKTNHKRGKK (83 aa)) is disordered. Residues 495–508 (RQQHRSRRSLRRRQ) show a composition bias toward basic residues. Positions 523 to 544 (VGKDQRRNHEELLVATSRKEPE) are enriched in basic and acidic residues. Residues 556 to 567 (RSPKTNHKRGKK) are compositionally biased toward basic residues.

This sequence belongs to the krueppel C2H2-type zinc-finger protein family.

The protein resides in the nucleus. May be involved in transcriptional regulation. The chain is Zinc finger protein 512 (ZNF512) from Bos taurus (Bovine).